Consider the following 279-residue polypeptide: MEVERDQHKPPLSLQNNKIPSSQNFPVVDLSNTNGELVARKVAKASEEWGIFQVVNHGIPTELIRRLHKVDTQFFELPESKKEAVAKPANSKEIQGYEMDDVQGRRSHIFHNLYPSSSVNYAFWPKNPPEYREVTEEFAKHAKQLAEEILGLLSEGAGYLMKINYYRPCPEPDWVMGIKAHTDFNGLTLLIPNEIFGLQVFKEDRWLDVDYIYPAVIIIIGDQIMKMSNGRYNNVLHRALMDKKKTRMSSVVHIKPPYDMVVSHFPNSPAAIILPSSSL.

Residues 1 to 25 are disordered; that stretch reads MEVERDQHKPPLSLQNNKIPSSQNF. Residues 13–25 are compositionally biased toward polar residues; the sequence is SLQNNKIPSSQNF. The 101-residue stretch at 156–256 folds into the Fe2OG dioxygenase domain; it reads GAGYLMKINY…RMSSVVHIKP (101 aa). Residue 164 to 166 coordinates 2-oxoglutarate; the sequence is NYY. Residues His-181, Asp-183, and His-237 each coordinate Fe cation. 247 to 249 contacts 2-oxoglutarate; it reads RMS.

The protein belongs to the iron/ascorbate-dependent oxidoreductase family. Fe(2+) is required as a cofactor.

It carries out the reaction a (2R,3R)-dihydroflavonol + 2-oxoglutarate + O2 = a flavonol + succinate + CO2 + H2O. It functions in the pathway secondary metabolite biosynthesis; flavonoid biosynthesis. This chain is Probable flavonol synthase 4 (FLS4), found in Arabidopsis thaliana (Mouse-ear cress).